The primary structure comprises 223 residues: Thiamine-phosphate synthase (223 aa).

Residues 45-49 (QYREK) and asparagine 77 contribute to the 4-amino-2-methyl-5-(diphosphooxymethyl)pyrimidine site. Mg(2+) is bound by residues aspartate 78 and aspartate 97. Threonine 116 contributes to the 4-amino-2-methyl-5-(diphosphooxymethyl)pyrimidine binding site. Position 142 to 144 (142 to 144 (SYT)) interacts with 2-[(2R,5Z)-2-carboxy-4-methylthiazol-5(2H)-ylidene]ethyl phosphate. Lysine 145 serves as a coordination point for 4-amino-2-methyl-5-(diphosphooxymethyl)pyrimidine. 2-[(2R,5Z)-2-carboxy-4-methylthiazol-5(2H)-ylidene]ethyl phosphate-binding positions include glycine 173 and 193-194 (VT).

Belongs to the thiamine-phosphate synthase family. Requires Mg(2+) as cofactor.

The catalysed reaction is 2-[(2R,5Z)-2-carboxy-4-methylthiazol-5(2H)-ylidene]ethyl phosphate + 4-amino-2-methyl-5-(diphosphooxymethyl)pyrimidine + 2 H(+) = thiamine phosphate + CO2 + diphosphate. The enzyme catalyses 2-(2-carboxy-4-methylthiazol-5-yl)ethyl phosphate + 4-amino-2-methyl-5-(diphosphooxymethyl)pyrimidine + 2 H(+) = thiamine phosphate + CO2 + diphosphate. It carries out the reaction 4-methyl-5-(2-phosphooxyethyl)-thiazole + 4-amino-2-methyl-5-(diphosphooxymethyl)pyrimidine + H(+) = thiamine phosphate + diphosphate. It functions in the pathway cofactor biosynthesis; thiamine diphosphate biosynthesis; thiamine phosphate from 4-amino-2-methyl-5-diphosphomethylpyrimidine and 4-methyl-5-(2-phosphoethyl)-thiazole: step 1/1. Functionally, condenses 4-methyl-5-(beta-hydroxyethyl)thiazole monophosphate (THZ-P) and 2-methyl-4-amino-5-hydroxymethyl pyrimidine pyrophosphate (HMP-PP) to form thiamine monophosphate (TMP). In Dictyoglomus turgidum (strain DSM 6724 / Z-1310), this protein is Thiamine-phosphate synthase.